A 257-amino-acid chain; its full sequence is Deoxyribose-phosphate aldolase (257 aa).

The Proton donor/acceptor role is filled by Asp-102. Lys-166 acts as the Schiff-base intermediate with acetaldehyde in catalysis. Lys-198 acts as the Proton donor/acceptor in catalysis.

This sequence belongs to the DeoC/FbaB aldolase family. DeoC type 2 subfamily.

It localises to the cytoplasm. The enzyme catalyses 2-deoxy-D-ribose 5-phosphate = D-glyceraldehyde 3-phosphate + acetaldehyde. The protein operates within carbohydrate degradation; 2-deoxy-D-ribose 1-phosphate degradation; D-glyceraldehyde 3-phosphate and acetaldehyde from 2-deoxy-alpha-D-ribose 1-phosphate: step 2/2. Catalyzes a reversible aldol reaction between acetaldehyde and D-glyceraldehyde 3-phosphate to generate 2-deoxy-D-ribose 5-phosphate. In Aeromonas salmonicida (strain A449), this protein is Deoxyribose-phosphate aldolase.